The following is a 181-amino-acid chain: Peptide deformylase (181 aa).

Positions 103 and 145 each coordinate Fe cation. Glu-146 is a catalytic residue. A Fe cation-binding site is contributed by His-149.

This sequence belongs to the polypeptide deformylase family. Requires Fe(2+) as cofactor.

The enzyme catalyses N-terminal N-formyl-L-methionyl-[peptide] + H2O = N-terminal L-methionyl-[peptide] + formate. Its function is as follows. Removes the formyl group from the N-terminal Met of newly synthesized proteins. Requires at least a dipeptide for an efficient rate of reaction. N-terminal L-methionine is a prerequisite for activity but the enzyme has broad specificity at other positions. The sequence is that of Peptide deformylase from Orientia tsutsugamushi (strain Ikeda) (Rickettsia tsutsugamushi).